Here is a 297-residue protein sequence, read N- to C-terminus: SH2 domain-containing protein 6 (297 aa).

2 disordered regions span residues 1 to 61 (MSCP…FPTR) and 74 to 93 (MNPQ…RGTS). The span at 36–45 (PSKPPLPPPQ) shows a compositional bias: pro residues. In terms of domain architecture, SH2 spans 187–295 (WYSGNCDRQS…RGLTYLRFPT (109 aa)).

This is SH2 domain-containing protein 6 (Sh2d6) from Mus musculus (Mouse).